Consider the following 475-residue polypeptide: Bifunctional protein HldE (475 aa).

The segment at Met1–Thr320 is ribokinase. Asn196–Glu199 contacts ATP. Asp265 is an active-site residue. The cytidylyltransferase stretch occupies residues Phe346–Leu475.

This sequence in the N-terminal section; belongs to the carbohydrate kinase PfkB family. The protein in the C-terminal section; belongs to the cytidylyltransferase family. In terms of assembly, homodimer.

The catalysed reaction is D-glycero-beta-D-manno-heptose 7-phosphate + ATP = D-glycero-beta-D-manno-heptose 1,7-bisphosphate + ADP + H(+). It carries out the reaction D-glycero-beta-D-manno-heptose 1-phosphate + ATP + H(+) = ADP-D-glycero-beta-D-manno-heptose + diphosphate. The protein operates within nucleotide-sugar biosynthesis; ADP-L-glycero-beta-D-manno-heptose biosynthesis; ADP-L-glycero-beta-D-manno-heptose from D-glycero-beta-D-manno-heptose 7-phosphate: step 1/4. Its pathway is nucleotide-sugar biosynthesis; ADP-L-glycero-beta-D-manno-heptose biosynthesis; ADP-L-glycero-beta-D-manno-heptose from D-glycero-beta-D-manno-heptose 7-phosphate: step 3/4. Functionally, catalyzes the phosphorylation of D-glycero-D-manno-heptose 7-phosphate at the C-1 position to selectively form D-glycero-beta-D-manno-heptose-1,7-bisphosphate. Its function is as follows. Catalyzes the ADP transfer from ATP to D-glycero-beta-D-manno-heptose 1-phosphate, yielding ADP-D-glycero-beta-D-manno-heptose. This chain is Bifunctional protein HldE, found in Marinomonas sp. (strain MWYL1).